Reading from the N-terminus, the 296-residue chain is Uricase (296 aa).

Residues Lys14 and Thr61 each act as charge relay system in the active site. 7 residues coordinate urate: Thr61, Asp62, Phe163, Arg180, Val229, Gln230, and Asn256. Residue His258 is the Charge relay system of the active site.

It belongs to the uricase family.

Its subcellular location is the peroxisome. It localises to the cytoplasm. It is found in the nucleus. It catalyses the reaction urate + O2 + H2O = 5-hydroxyisourate + H2O2. It participates in purine metabolism; urate degradation; (S)-allantoin from urate: step 1/3. Its function is as follows. Catalyzes the oxidation of uric acid to 5-hydroxyisourate, which is further processed to form (S)-allantoin. The protein is Uricase of Schizosaccharomyces pombe (strain 972 / ATCC 24843) (Fission yeast).